Consider the following 111-residue polypeptide: Large ribosomal subunit protein uL22 (111 aa).

It belongs to the universal ribosomal protein uL22 family. As to quaternary structure, part of the 50S ribosomal subunit.

Functionally, this protein binds specifically to 23S rRNA; its binding is stimulated by other ribosomal proteins, e.g. L4, L17, and L20. It is important during the early stages of 50S assembly. It makes multiple contacts with different domains of the 23S rRNA in the assembled 50S subunit and ribosome. Its function is as follows. The globular domain of the protein is located near the polypeptide exit tunnel on the outside of the subunit, while an extended beta-hairpin is found that lines the wall of the exit tunnel in the center of the 70S ribosome. This is Large ribosomal subunit protein uL22 from Chlamydia pneumoniae (Chlamydophila pneumoniae).